The chain runs to 318 residues: MINIWTEKYRPKRLDDVIGEDENINTLKSFVKNGDLPHLIFAGPAGTGKTSTAIALTIELFGDDWKENFLELNASDERGIDIIRNNIKDFAKIRPSNKLGFKIIFLDEADQLTNEAQAALRRTMEMFYSTTRFIFSCNYSSKIIPPIQSRCVVLRFRPLDKEAMERKLREIAKNEKFDIDDDSLDAIYEISDGDMRKAINVMQAIQSTGEIKPSKIYEISGEINKNEYKNLISLSLNGAFSDAKSLLDKMLVDYGLSGIDIIRGMHSAIRNERIANRQKLEILIALAEFEFRISQGGSDNVQMDALLARISYIGSEIT.

43 to 50 (GPAGTGKT) provides a ligand contact to ATP.

This sequence belongs to the activator 1 small subunits family. RfcS subfamily. As to quaternary structure, heteromultimer composed of small subunits (RfcS) and large subunits (RfcL).

Part of the RFC clamp loader complex which loads the PCNA sliding clamp onto DNA. In Picrophilus torridus (strain ATCC 700027 / DSM 9790 / JCM 10055 / NBRC 100828 / KAW 2/3), this protein is Replication factor C small subunit.